The chain runs to 211 residues: ATP-dependent dethiobiotin synthetase BioD (211 aa).

An ATP-binding site is contributed by 10-15 (GIGKTY). Thr-14 serves as a coordination point for Mg(2+). Lys-35 is an active-site residue. Ser-39 contacts substrate. ATP-binding positions include Asp-44, 105 to 108 (EGAG), and 165 to 166 (NC). 2 residues coordinate Mg(2+): Asp-44 and Glu-105.

The protein belongs to the dethiobiotin synthetase family. Homodimer. The cofactor is Mg(2+).

The protein resides in the cytoplasm. It carries out the reaction (7R,8S)-7,8-diammoniononanoate + CO2 + ATP = (4R,5S)-dethiobiotin + ADP + phosphate + 3 H(+). It functions in the pathway cofactor biosynthesis; biotin biosynthesis; biotin from 7,8-diaminononanoate: step 1/2. Its function is as follows. Catalyzes a mechanistically unusual reaction, the ATP-dependent insertion of CO2 between the N7 and N8 nitrogen atoms of 7,8-diaminopelargonic acid (DAPA, also called 7,8-diammoniononanoate) to form a ureido ring. The sequence is that of ATP-dependent dethiobiotin synthetase BioD from Methanococcus vannielii (strain ATCC 35089 / DSM 1224 / JCM 13029 / OCM 148 / SB).